Here is a 187-residue protein sequence, read N- to C-terminus: Ion-translocating oxidoreductase complex subunit B (187 aa).

The tract at residues 1–26 (MTHILFAVLVLALLALAFGIILGFAA) is hydrophobic. One can recognise a 4Fe-4S domain in the interval 32-90 (EADPIVDQLDALLPQTQCGQCGYPGCKPYAEALANGDQINKCVPGGDATMRKIADLMGV). C49, C52, C57, C73, C115, C118, C121, C125, C145, C148, C151, and C155 together coordinate [4Fe-4S] cluster. 4Fe-4S ferredoxin-type domains lie at 106 to 135 (KVAF…GATK) and 136 to 165 (AMHT…MIPV).

This sequence belongs to the 4Fe4S bacterial-type ferredoxin family. RnfB subfamily. The complex is composed of six subunits: RnfA, RnfB, RnfC, RnfD, RnfE and RnfG. [4Fe-4S] cluster is required as a cofactor.

The protein resides in the cell inner membrane. Its function is as follows. Part of a membrane-bound complex that couples electron transfer with translocation of ions across the membrane. In Aeromonas salmonicida (strain A449), this protein is Ion-translocating oxidoreductase complex subunit B.